Reading from the N-terminus, the 210-residue chain is Urease accessory protein UreF (210 aa).

Belongs to the UreF family. UreD, UreF and UreG form a complex that acts as a GTP-hydrolysis-dependent molecular chaperone, activating the urease apoprotein by helping to assemble the nickel containing metallocenter of UreC. The UreE protein probably delivers the nickel.

It localises to the cytoplasm. Functionally, required for maturation of urease via the functional incorporation of the urease nickel metallocenter. The protein is Urease accessory protein UreF of Cereibacter sphaeroides (strain ATCC 17025 / ATH 2.4.3) (Rhodobacter sphaeroides).